The sequence spans 434 residues: Histidinol dehydrogenase (434 aa).

Y130, Q188, and N211 together coordinate NAD(+). 3 residues coordinate substrate: S237, Q259, and H262. Positions 259 and 262 each coordinate Zn(2+). Residues E326 and H327 each act as proton acceptor in the active site. Residues H327, D360, E414, and H419 each contribute to the substrate site. Zn(2+) is bound at residue D360. Residue H419 coordinates Zn(2+).

This sequence belongs to the histidinol dehydrogenase family. As to quaternary structure, homodimer. Zn(2+) is required as a cofactor.

It carries out the reaction L-histidinol + 2 NAD(+) + H2O = L-histidine + 2 NADH + 3 H(+). It participates in amino-acid biosynthesis; L-histidine biosynthesis; L-histidine from 5-phospho-alpha-D-ribose 1-diphosphate: step 9/9. Functionally, catalyzes the sequential NAD-dependent oxidations of L-histidinol to L-histidinaldehyde and then to L-histidine. The polypeptide is Histidinol dehydrogenase (Shigella flexneri).